The chain runs to 100 residues: Aspartyl/glutamyl-tRNA(Asn/Gln) amidotransferase subunit C (100 aa).

This sequence belongs to the GatC family. Heterotrimer of A, B and C subunits.

The enzyme catalyses L-glutamyl-tRNA(Gln) + L-glutamine + ATP + H2O = L-glutaminyl-tRNA(Gln) + L-glutamate + ADP + phosphate + H(+). It carries out the reaction L-aspartyl-tRNA(Asn) + L-glutamine + ATP + H2O = L-asparaginyl-tRNA(Asn) + L-glutamate + ADP + phosphate + 2 H(+). Allows the formation of correctly charged Asn-tRNA(Asn) or Gln-tRNA(Gln) through the transamidation of misacylated Asp-tRNA(Asn) or Glu-tRNA(Gln) in organisms which lack either or both of asparaginyl-tRNA or glutaminyl-tRNA synthetases. The reaction takes place in the presence of glutamine and ATP through an activated phospho-Asp-tRNA(Asn) or phospho-Glu-tRNA(Gln). The sequence is that of Aspartyl/glutamyl-tRNA(Asn/Gln) amidotransferase subunit C from Staphylococcus epidermidis (strain ATCC 35984 / DSM 28319 / BCRC 17069 / CCUG 31568 / BM 3577 / RP62A).